The following is a 142-amino-acid chain: Midkine (142 aa).

The first 21 residues, 1-21, serve as a signal peptide directing secretion; sequence MELRAFCVILLITFLAVSSQA. 5 cysteine pairs are disulfide-bonded: Cys36/Cys60, Cys44/Cys69, Cys51/Cys73, Cys83/Cys115, and Cys93/Cys125.

This sequence belongs to the pleiotrophin family.

It localises to the secreted. Its function is as follows. Secreted protein that functions as a cytokine and growth factor and mediates its signal through cell-surface proteoglycan and non-proteoglycan receptors. Binds cell-surface proteoglycan receptors via their chondroitin sulfate (CS) groups. Thereby regulates many processes like inflammatory response, cell proliferation, cell adhesion, cell growth, cell survival, tissue regeneration, cell differentiation and cell migration. Inhibits mesoderm formation and promotes neural formation during development. Plays a role in development of the neuromuscular junction (NMJ). Has antibacterial activity against both Gram-positive and Gram-negative bacteria. This chain is Midkine, found in Xenopus tropicalis (Western clawed frog).